The chain runs to 1871 residues: Plexin-A3 (1871 aa).

A signal peptide spans 1 to 19 (MPSVCLLLLLFLAVGGALG). The Sema domain maps to 20–488 (NRPFRAFVVT…SEKQVSQLPV (469 aa)). Over 20–1220 (NRPFRAFVVT…SAERALTLPA (1201 aa)) the chain is Extracellular. N-linked (GlcNAc...) asparagine glycosylation occurs at Asn59. 9 disulfides stabilise this stretch: Cys77–Cys86, Cys112–Cys120, Cys266–Cys387, Cys282–Cys338, Cys356–Cys375, Cys491–Cys508, Cys497–Cys539, Cys500–Cys517, and Cys511–Cys523. N-linked (GlcNAc...) asparagine glycosylation is present at Asn548. A disulfide bond links Cys574 and Cys594. Asn637, Asn738, and Asn746 each carry an N-linked (GlcNAc...) asparagine glycan. IPT/TIG domains lie at 840-933 (PRIT…YSFV), 935-1020 (PTFD…YTYT), 1023-1122 (PTVT…FTYY), and 1125-1211 (PSFE…LHIS). Residues Asn1009, Asn1036, Asn1073, Asn1115, and Asn1162 are each glycosylated (N-linked (GlcNAc...) asparagine). Residues 1221–1241 (MMGLAAGGGLLLLAITAVLVA) traverse the membrane as a helical segment. The Cytoplasmic segment spans residues 1242 to 1871 (YKRKTQDADR…QIISLVSSDS (630 aa)). Ser1596 is subject to Phosphoserine.

This sequence belongs to the plexin family. Interacts with CBFA2T3/MTG16.

The protein resides in the cell membrane. Coreceptor for SEMA3A and SEMA3F. Necessary for signaling by class 3 semaphorins and subsequent remodeling of the cytoskeleton. Plays a role in axon guidance in the developing nervous system. Regulates the migration of sympathetic neurons, but not of neural crest precursors. Required for normal dendrite spine morphology in pyramidal neurons. May play a role in regulating semaphorin-mediated programmed cell death in the developing nervous system. Class 3 semaphorins bind to a complex composed of a neuropilin and a plexin. The plexin modulates the affinity of the complex for specific semaphorins, and its cytoplasmic domain is required for the activation of down-stream signaling events in the cytoplasm. The polypeptide is Plexin-A3 (PLXNA3) (Homo sapiens (Human)).